We begin with the raw amino-acid sequence, 193 residues long: C-type lectin domain family 3 member A homolog (193 aa).

Residues 1–24 (MAQAGLLIWLFFTILLLDLTCTQS) form the signal peptide. Intrachain disulfides connect cysteine 66-cysteine 76, cysteine 93-cysteine 188, and cysteine 164-cysteine 180. Residues 72–189 (IHKKCYLSFE…CRSLKKYICE (118 aa)) enclose the C-type lectin domain.

It localises to the secreted. This Xenopus laevis (African clawed frog) protein is C-type lectin domain family 3 member A homolog (clec3a).